A 156-amino-acid polypeptide reads, in one-letter code: Ribonuclease ageritin (156 aa).

Positions 1-21 (MSESSTFTTAVVPEGEGVAPM) are cleaved as a signal peptide. Residue His98 is part of the active site. Residues Asn100 and Asn139 are each glycosylated (N-linked (GlcNAc...) asparagine).

Belongs to the ribotoxin-like family. In terms of assembly, monomer. It depends on Mg(2+) as a cofactor.

It localises to the vacuole lumen. The catalysed reaction is a 28S rRNA containing guanosine-adenosine pair + H2O = an [RNA fragment]-3'-adenosine-3'-phosphate + a 5'-a hydroxy-guanosine-3'-[RNA fragment].. With respect to regulation, in contrast to most ribotoxins, activity is completely inhibited by EDTA. In terms of biological role, fungal ribonuclease involved in fungal defense. Highly specific and highly toxic fungal endonuclease that cleaves a single phosphodiester bond in the 28S RNA of eukaryotic ribosomes at a universally conserved GAGA tetraloop of the sarcin-ricin loop (SRL). The damage of the SRL inhibits the binding of translation elongation factors and halts protein biosynthesis, ultimately resulting in the death of the target cells. Shows antitumor activity. Exerts cytotoxicity and induces apoptosis towards rat glial cells and human glioma cells, and also displays some activity towards human neurolastoma cell lines. Shows a strong entomotoxicity against Aedes aegypti larvae, yet no nematotoxicity against nematodes. The sequence is that of Ribonuclease ageritin from Cyclocybe aegerita (Black poplar mushroom).